We begin with the raw amino-acid sequence, 569 residues long: Formate hydrogenlyase subunit 5 (569 aa).

Positions 538–569 (MTVVDVRKKKSKVVPYKELERYSIERKNSPLK) are excised as a propeptide.

It belongs to the complex I 49 kDa subunit family. In terms of assembly, FHL comprises of a formate dehydrogenase, unidentified electron carriers and a hydrogenase (isoenzyme 3). In this non-energy conserving pathway molecular hydrogen and carbodioxide from formate are released. [4Fe-4S] cluster is required as a cofactor. The cofactor is Ni(2+).

The polypeptide is Formate hydrogenlyase subunit 5 (hycE) (Escherichia coli (strain K12)).